Reading from the N-terminus, the 233-residue chain is Phosphoribosylformylglycinamidine synthase subunit PurQ (233 aa).

The Glutamine amidotransferase type-1 domain maps to 3–233 (AAILVFPGIN…GLAQHLEKAA (231 aa)). The Nucleophile role is filled by Cys-87. Active-site residues include His-204 and Glu-206.

Part of the FGAM synthase complex composed of 1 PurL, 1 PurQ and 2 PurS subunits.

The protein localises to the cytoplasm. The catalysed reaction is N(2)-formyl-N(1)-(5-phospho-beta-D-ribosyl)glycinamide + L-glutamine + ATP + H2O = 2-formamido-N(1)-(5-O-phospho-beta-D-ribosyl)acetamidine + L-glutamate + ADP + phosphate + H(+). It catalyses the reaction L-glutamine + H2O = L-glutamate + NH4(+). It functions in the pathway purine metabolism; IMP biosynthesis via de novo pathway; 5-amino-1-(5-phospho-D-ribosyl)imidazole from N(2)-formyl-N(1)-(5-phospho-D-ribosyl)glycinamide: step 1/2. Its function is as follows. Part of the phosphoribosylformylglycinamidine synthase complex involved in the purines biosynthetic pathway. Catalyzes the ATP-dependent conversion of formylglycinamide ribonucleotide (FGAR) and glutamine to yield formylglycinamidine ribonucleotide (FGAM) and glutamate. The FGAM synthase complex is composed of three subunits. PurQ produces an ammonia molecule by converting glutamine to glutamate. PurL transfers the ammonia molecule to FGAR to form FGAM in an ATP-dependent manner. PurS interacts with PurQ and PurL and is thought to assist in the transfer of the ammonia molecule from PurQ to PurL. The sequence is that of Phosphoribosylformylglycinamidine synthase subunit PurQ from Bradyrhizobium diazoefficiens (strain JCM 10833 / BCRC 13528 / IAM 13628 / NBRC 14792 / USDA 110).